The chain runs to 311 residues: 5'-adenylylsulfate reductase-like 3 (311 aa).

An N-terminal signal peptide occupies residues 1–22 (MATRLLCWTALLLPIIAATAAA). Residues 23–164 (SPLPEACPVP…LAAFYRDVSG (142 aa)) form the Thioredoxin domain. Asparagine 139 carries N-linked (GlcNAc...) asparagine glycosylation. A helical membrane pass occupies residues 210–230 (LALATAFVILRLLYLLFPKIG). N-linked (GlcNAc...) asparagine glycosylation is found at asparagine 281 and asparagine 305.

Its subcellular location is the membrane. This is 5'-adenylylsulfate reductase-like 3 (APRL3) from Oryza sativa subsp. japonica (Rice).